The primary structure comprises 238 residues: Large ribosomal subunit protein uL1 (238 aa).

The protein belongs to the universal ribosomal protein uL1 family. As to quaternary structure, part of the 50S ribosomal subunit.

Binds directly to 23S rRNA. The L1 stalk is quite mobile in the ribosome, and is involved in E site tRNA release. Functionally, protein L1 is also a translational repressor protein, it controls the translation of the L11 operon by binding to its mRNA. The protein is Large ribosomal subunit protein uL1 of Salinispora arenicola (strain CNS-205).